Consider the following 350-residue polypeptide: Protein Wnt-2 (350 aa).

The N-terminal stretch at Met-1–Ala-25 is a signal peptide. 11 disulfides stabilise this stretch: Cys-74–Cys-85, Cys-125–Cys-133, Cys-135–Cys-155, Cys-204–Cys-218, Cys-206–Cys-213, Cys-276–Cys-307, Cys-292–Cys-302, Cys-306–Cys-346, Cys-322–Cys-337, Cys-324–Cys-334, and Cys-329–Cys-330. Asn-132 is a glycosylation site (N-linked (GlcNAc...) asparagine). The O-palmitoleoyl serine; by PORCN moiety is linked to residue Ser-210. Asn-293 is a glycosylation site (N-linked (GlcNAc...) asparagine).

Belongs to the Wnt family. In terms of processing, palmitoleoylation is required for efficient binding to frizzled receptors. Depalmitoleoylation leads to Wnt signaling pathway inhibition.

The protein resides in the secreted. It localises to the extracellular space. It is found in the extracellular matrix. In terms of biological role, ligand for members of the frizzled family of seven transmembrane receptors. Functions in the canonical Wnt signaling pathway that results in activation of transcription factors of the TCF/LEF family. The chain is Protein Wnt-2 (wnt2) from Danio rerio (Zebrafish).